The following is a 347-amino-acid chain: NADH-quinone oxidoreductase subunit H (347 aa).

Transmembrane regions (helical) follow at residues 22-42 (GVVS…TAYL), 59-79 (PSLA…KLVF), 93-113 (FIIA…VIPI), 124-144 (IGGI…IIIA), 171-191 (MALS…IQIV), 198-218 (PIWL…SILA), 240-260 (VEYS…NMIL), 285-305 (IPGY…FLWI), and 321-341 (GLKV…AILV).

Belongs to the complex I subunit 1 family. In terms of assembly, NDH-1 is composed of 14 different subunits. Subunits NuoA, H, J, K, L, M, N constitute the membrane sector of the complex.

It is found in the cell inner membrane. The catalysed reaction is a quinone + NADH + 5 H(+)(in) = a quinol + NAD(+) + 4 H(+)(out). Functionally, NDH-1 shuttles electrons from NADH, via FMN and iron-sulfur (Fe-S) centers, to quinones in the respiratory chain. The immediate electron acceptor for the enzyme in this species is believed to be ubiquinone. Couples the redox reaction to proton translocation (for every two electrons transferred, four hydrogen ions are translocated across the cytoplasmic membrane), and thus conserves the redox energy in a proton gradient. This subunit may bind ubiquinone. The chain is NADH-quinone oxidoreductase subunit H from Orientia tsutsugamushi (strain Ikeda) (Rickettsia tsutsugamushi).